The primary structure comprises 185 residues: MAEPMTEQQKTENWLEIGTIVAAQGIQGEVRVLSASDFPARFLTKGQRWIRKTPQETPQPLTLKKGKQIPGKNLYILRFTEITDRNQAEALVNYQLLVPATDRLPLEPGEFHVTDLLGLIVYDHDNGDRLGIVTDFYSAGNDLLGITLDKNPDKEVLVPFVEAIVPTVELAEQRLEIKTIPGLLD.

Positions 108-183 constitute a PRC barrel domain; sequence PGEFHVTDLL…RLEIKTIPGL (76 aa).

This sequence belongs to the RimM family. As to quaternary structure, binds ribosomal protein uS19.

The protein localises to the cytoplasm. In terms of biological role, an accessory protein needed during the final step in the assembly of 30S ribosomal subunit, possibly for assembly of the head region. Essential for efficient processing of 16S rRNA. May be needed both before and after RbfA during the maturation of 16S rRNA. It has affinity for free ribosomal 30S subunits but not for 70S ribosomes. This is Ribosome maturation factor RimM from Synechocystis sp. (strain ATCC 27184 / PCC 6803 / Kazusa).